Consider the following 249-residue polypeptide: ATP synthase subunit a, chloroplastic (249 aa).

5 helical membrane-spanning segments follow: residues 40–60 (QVLI…VLVV), 97–117 (VPFI…GALL), 136–156 (INTT…AGLS), 201–221 (LVVV…VMFL), and 222–242 (GLFT…AYIG).

The protein belongs to the ATPase A chain family. As to quaternary structure, F-type ATPases have 2 components, CF(1) - the catalytic core - and CF(0) - the membrane proton channel. CF(1) has five subunits: alpha(3), beta(3), gamma(1), delta(1), epsilon(1). CF(0) has four main subunits: a, b, b' and c.

Its subcellular location is the plastid. It localises to the chloroplast thylakoid membrane. In terms of biological role, key component of the proton channel; it plays a direct role in the translocation of protons across the membrane. The protein is ATP synthase subunit a, chloroplastic of Aethionema grandiflorum (Persian stone-cress).